The sequence spans 247 residues: tRNA uridine(34) hydroxylase (247 aa).

The 95-residue stretch at 124 to 218 (TKQDVIVIDT…YLEDTQNKNN (95 aa)) folds into the Rhodanese domain. Cysteine 178 functions as the Cysteine persulfide intermediate in the catalytic mechanism.

It belongs to the TrhO family.

It catalyses the reaction uridine(34) in tRNA + AH2 + O2 = 5-hydroxyuridine(34) in tRNA + A + H2O. Functionally, catalyzes oxygen-dependent 5-hydroxyuridine (ho5U) modification at position 34 in tRNAs. The chain is tRNA uridine(34) hydroxylase from Rickettsia massiliae (strain Mtu5).